Here is a 33-residue protein sequence, read N- to C-terminus: Translocation protein SEC63 homolog (33 aa).

The ER translocon complex consists of channel-forming core components SEC61A1, SEC61B and SEC61G and different auxiliary components such as SEC62 and SEC63. Pancreas.

Its subcellular location is the endoplasmic reticulum membrane. Functionally, mediates cotranslational and post-translational transport of certain precursor polypeptides across endoplasmic reticulum (ER). Proposed to play an auxiliary role in recognition of precursors with short and apolar signal peptides. May cooperate with SEC62 and HSPA5/BiP to facilitate targeting of small presecretory proteins into the SEC61 channel-forming translocon complex, triggering channel opening for polypeptide translocation to the ER lumen. Required for efficient PKD1/Polycystin-1 biogenesis and trafficking to the plasma membrane of the primary cilia. This is Translocation protein SEC63 homolog (SEC63) from Canis lupus familiaris (Dog).